The primary structure comprises 466 residues: Asparagine--tRNA ligase (466 aa).

This sequence belongs to the class-II aminoacyl-tRNA synthetase family. Homodimer.

The protein resides in the cytoplasm. It carries out the reaction tRNA(Asn) + L-asparagine + ATP = L-asparaginyl-tRNA(Asn) + AMP + diphosphate + H(+). This is Asparagine--tRNA ligase from Xylella fastidiosa (strain 9a5c).